Here is a 506-residue protein sequence, read N- to C-terminus: DNA nucleotidylexotransferase (506 aa).

Residues Ser11 to Lys17 carry the Nuclear localization signal motif. Residues Gly27–His124 enclose the BRCT domain. The interval Val258 to Thr262 is involved in DNA binding. Residues Gly333–Lys338 and His342–Asp345 each bind a 2'-deoxyribonucleoside 5'-triphosphate. 3 residues coordinate Mg(2+): Asp343, Asp345, and Asp430. Gly445–Trp446 is an a 2'-deoxyribonucleoside 5'-triphosphate binding site.

It belongs to the DNA polymerase type-X family. It depends on Mg(2+) as a cofactor.

Its subcellular location is the nucleus. The catalysed reaction is DNA(n) + a 2'-deoxyribonucleoside 5'-triphosphate = DNA(n+1) + diphosphate. Its function is as follows. Template-independent DNA polymerase which catalyzes the random addition of deoxynucleoside 5'-triphosphate to the 3'-end of a DNA initiator. One of the in vivo functions of this enzyme is the addition of nucleotides at the junction (N region) of rearranged Ig heavy chain and T-cell receptor gene segments during the maturation of B- and T-cells. The chain is DNA nucleotidylexotransferase (DNTT) from Gallus gallus (Chicken).